The following is a 423-amino-acid chain: Transducer protein Htr13 (423 aa).

Residues 1-19 are compositionally biased toward polar residues; sequence MTGPDNSLTDPSASPSTPV. The segment at 1-21 is disordered; the sequence is MTGPDNSLTDPSASPSTPVAS. Residues 152–388 enclose the Methyl-accepting transducer domain; it reads AVAELIERAR…ELTMMIDEAA (237 aa).

Belongs to the methyl-accepting chemotaxis (MCP) protein family. In terms of processing, methylated by CheR.

It is found in the cytoplasm. Potentially involved in chemo- or phototactic signal transduction. This is Transducer protein Htr13 (htr13) from Halobacterium salinarum (strain ATCC 29341 / DSM 671 / R1).